Here is a 271-residue protein sequence, read N- to C-terminus: GPN-loop GTPase 3 (271 aa).

Residue 13–18 (GAGKST) participates in GTP binding. A Gly-Pro-Asn (GPN)-loop; involved in dimer interface motif is present at residues 70-72 (GPN). 173–176 (SKLD) lines the GTP pocket.

This sequence belongs to the GPN-loop GTPase family. Heterodimers with GPN1 or GPN2. Binds to RNA polymerase II (RNAPII).

Functionally, small GTPase required for proper nuclear import of RNA polymerase II and III (RNAPII and RNAPIII). May act at an RNAP assembly step prior to nuclear import. The sequence is that of GPN-loop GTPase 3 from Candida glabrata (strain ATCC 2001 / BCRC 20586 / JCM 3761 / NBRC 0622 / NRRL Y-65 / CBS 138) (Yeast).